Consider the following 149-residue polypeptide: MSGASARDATFLAFDYGEKRIGVALGNALTRSARALVVIPNLNREHRFKAVGELLAEWRPDALVVGLPMHPDGTPHDMTQQAKRFGNQLNGRFGLPVTWVDERYSSVEAEAGLRERNVRGRARTDMLDAEAARVILQQYFDELSDHEHH.

The protein belongs to the YqgF nuclease family.

It is found in the cytoplasm. Its function is as follows. Could be a nuclease involved in processing of the 5'-end of pre-16S rRNA. The polypeptide is Putative pre-16S rRNA nuclease (Burkholderia vietnamiensis (strain G4 / LMG 22486) (Burkholderia cepacia (strain R1808))).